A 354-amino-acid polypeptide reads, in one-letter code: Guanine nucleotide-binding protein G(i) subunit alpha-1 (354 aa).

Glycine 2 carries the N-myristoyl glycine lipid modification. A lipid anchor (S-palmitoyl cysteine) is attached at cysteine 3. Residues 32-354 (REVKLLLLGA…KNNLKDCGLF (323 aa)) enclose the G-alpha domain. Residues 35–48 (KLLLLGAGESGKST) form a G1 motif region. Residues 43-48 (ESGKST), 150-151 (DS), and 175-178 (LRTR) each bind GTP. Serine 47 serves as a coordination point for Mg(2+). The tract at residues 173-181 (DVLRTRVKT) is G2 motif. Mg(2+) is bound at residue threonine 181. The segment at 196 to 205 (FKMFDVGGQR) is G3 motif. Residues 200–204 (DVGGQ), 269–272 (NKKD), and alanine 326 contribute to the GTP site. The interval 265-272 (ILFLNKKD) is G4 motif. The segment at 324 to 329 (TCATDT) is G5 motif.

The protein belongs to the G-alpha family. G(i/o/t/z) subfamily. In terms of assembly, heterotrimeric G proteins are composed of 3 units; alpha, beta and gamma. The alpha chain contains the guanine nucleotide binding site. Part of a spindle orientation complex at least composed of GNAI1, GPSM2 and NUMA1. Identified in complex with the beta subunit GNB1 and the gamma subunit GNG1. Identified in complex with the beta subunit GNB1 and the gamma subunit GNG2. Component of the TAS2R14-GNAI1 complex, consisting of TAS2R14, GNAI1, GNB1 and GNG2; within the complex interacts with TAS2R14; this complex plays a role in the perception of bitterness. GTP binding causes dissociation of the heterotrimer, liberating the individual subunits so that they can interact with downstream effector proteins. Interacts (GDP-bound form) with GPSM1; this inhibits guanine nucleotide exchange and GTP binding. Interacts (GDP-bound form) with GPSM2 (via GoLoco domains); this inhibits guanine nucleotide exchange. Interacts with RGS10; this strongly enhances GTP hydrolysis. Interacts with RGS1 and RGS16; this strongly enhances GTPase activity. Interacts with RGS4. Interacts with RGS12. Interacts (via active GTP- or inactive GDP-bound forms) with RGS14 (via RGS and GoLoco domains). Interacts with RGS3, RGS6, RGS7, RGS8, RGS17, RGS18 and RGS20 (in vitro). Interacts (GDP-bound form) with RIC8A (via C-terminus); promoting GNAI1 folding and association with the plasma membrane. Interacts (inactive GDP-bound form) with NUCB1 (via GBA motif); the interaction leads to activation of GNAI1. Interacts (inactive GDP-bound form) with CCDC88C/DAPLE (via GBA motif); the interaction leads to activation of GNAI1. Interacts (inactive GDP-bound form) with CCDC8A/GIV (via GBA motif). Myristoylation at Gly-2 is required for membrane anchoring before palmitoylation. In terms of processing, palmitoylation at Cys-3 varies with membrane lipid composition. As to expression, mainly expressed in the brain, lung and kidney.

The protein localises to the nucleus. It localises to the cytoplasm. The protein resides in the cell membrane. It is found in the cytoskeleton. Its subcellular location is the microtubule organizing center. The protein localises to the centrosome. It localises to the cell cortex. The protein resides in the membrane. It catalyses the reaction GTP + H2O = GDP + phosphate + H(+). Functionally, guanine nucleotide-binding proteins (G proteins) function as transducers downstream of G protein-coupled receptors (GPCRs) in numerous signaling cascades. The alpha chain contains the guanine nucleotide binding site and alternates between an active, GTP-bound state and an inactive, GDP-bound state. Signaling by an activated GPCR promotes GDP release and GTP binding. The alpha subunit has a low GTPase activity that converts bound GTP to GDP, thereby terminating the signal. Both GDP release and GTP hydrolysis are modulated by numerous regulatory proteins. Signaling is mediated via effector proteins, such as adenylate cyclase. Inhibits adenylate cyclase activity of ADCY1, ADCY5 and ADCY6, leading to decreased intracellular cAMP levels. The inactive GDP-bound form prevents the association of RGS14 with centrosomes and is required for the translocation of RGS14 from the cytoplasm to the plasma membrane. Required for normal cytokinesis during mitosis. Required for cortical dynein-dynactin complex recruitment during metaphase. In Cavia porcellus (Guinea pig), this protein is Guanine nucleotide-binding protein G(i) subunit alpha-1 (GNAI1).